Here is a 418-residue protein sequence, read N- to C-terminus: F-box/kelch-repeat protein SKIP20 (418 aa).

The F-box domain occupies 14 to 61 (DLIPGLPEELAIECLVRVPFQFHSSIKSVCRSWKCVISSRSFIKERIG). A disordered region spans residues 79-104 (PSPAMMEGGEMSQKKKEEEEGESQMT). Kelch repeat units lie at residues 104–150 (TQQL…AIQD), 153–206 (KVLL…SVGS), 208–255 (KVYV…SMAT), and 258–314 (GFCV…EFPG).

In terms of assembly, part of a SCF (ASK-cullin-F-box) protein ligase complex. Interacts with SKP1A/ASK1 and SPK1B/ASK2.

Its subcellular location is the nucleus. It functions in the pathway protein modification; protein ubiquitination. Its function is as follows. Component of SCF(ASK-cullin-F-box) E3 ubiquitin ligase complexes, which may mediate the ubiquitination and subsequent proteasomal degradation of target proteins. The protein is F-box/kelch-repeat protein SKIP20 (SKIP20) of Arabidopsis thaliana (Mouse-ear cress).